The chain runs to 312 residues: Methionyl-tRNA formyltransferase (312 aa).

117–120 (SLLP) is a binding site for (6S)-5,6,7,8-tetrahydrofolate.

The protein belongs to the Fmt family.

The enzyme catalyses L-methionyl-tRNA(fMet) + (6R)-10-formyltetrahydrofolate = N-formyl-L-methionyl-tRNA(fMet) + (6S)-5,6,7,8-tetrahydrofolate + H(+). Its function is as follows. Attaches a formyl group to the free amino group of methionyl-tRNA(fMet). The formyl group appears to play a dual role in the initiator identity of N-formylmethionyl-tRNA by promoting its recognition by IF2 and preventing the misappropriation of this tRNA by the elongation apparatus. The chain is Methionyl-tRNA formyltransferase from Bordetella parapertussis (strain 12822 / ATCC BAA-587 / NCTC 13253).